The chain runs to 710 residues: Ribonuclease R (710 aa).

Residues 246-573 (RKDLRDKVIV…VHRLLKLYLE (328 aa)) enclose the RNB domain. The S1 motif domain maps to 625-705 (GEVFNVVVTN…IRGEIDFVLV (81 aa)).

Belongs to the RNR ribonuclease family. RNase R subfamily.

The protein resides in the cytoplasm. The enzyme catalyses Exonucleolytic cleavage in the 3'- to 5'-direction to yield nucleoside 5'-phosphates.. Functionally, 3'-5' exoribonuclease that releases 5'-nucleoside monophosphates and is involved in maturation of structured RNAs. The protein is Ribonuclease R of Thermotoga maritima (strain ATCC 43589 / DSM 3109 / JCM 10099 / NBRC 100826 / MSB8).